The chain runs to 388 residues: Phosphopentomutase (388 aa).

Mn(2+) contacts are provided by Asp9, Asp283, His288, Asp324, His325, and His336.

The protein belongs to the phosphopentomutase family. Mn(2+) is required as a cofactor.

The protein resides in the cytoplasm. It carries out the reaction 2-deoxy-alpha-D-ribose 1-phosphate = 2-deoxy-D-ribose 5-phosphate. The enzyme catalyses alpha-D-ribose 1-phosphate = D-ribose 5-phosphate. It participates in carbohydrate degradation; 2-deoxy-D-ribose 1-phosphate degradation; D-glyceraldehyde 3-phosphate and acetaldehyde from 2-deoxy-alpha-D-ribose 1-phosphate: step 1/2. In terms of biological role, isomerase that catalyzes the conversion of deoxy-ribose 1-phosphate (dRib-1-P) and ribose 1-phosphate (Rib-1-P) to deoxy-ribose 5-phosphate (dRib-5-P) and ribose 5-phosphate (Rib-5-P), respectively. This is Phosphopentomutase from Deinococcus radiodurans (strain ATCC 13939 / DSM 20539 / JCM 16871 / CCUG 27074 / LMG 4051 / NBRC 15346 / NCIMB 9279 / VKM B-1422 / R1).